Here is a 541-residue protein sequence, read N- to C-terminus: Chaperonin GroEL 2 (541 aa).

Residues 29–32 (TLGP), 86–90 (DGTTT), G413, 476–478 (NAA), and D492 contribute to the ATP site.

This sequence belongs to the chaperonin (HSP60) family. As to quaternary structure, forms a cylinder of 14 subunits composed of two heptameric rings stacked back-to-back. Interacts with the co-chaperonin GroES.

The protein localises to the secreted. Its subcellular location is the capsule. The protein resides in the cell surface. It localises to the cell wall. The catalysed reaction is ATP + H2O + a folded polypeptide = ADP + phosphate + an unfolded polypeptide.. Together with its co-chaperonin GroES, plays an essential role in assisting protein folding. The GroEL-GroES system forms a nano-cage that allows encapsulation of the non-native substrate proteins and provides a physical environment optimized to promote and accelerate protein folding. The chain is Chaperonin GroEL 2 from Mycolicibacterium vanbaalenii (strain DSM 7251 / JCM 13017 / BCRC 16820 / KCTC 9966 / NRRL B-24157 / PYR-1) (Mycobacterium vanbaalenii).